A 277-amino-acid polypeptide reads, in one-letter code: Endochitinase CHI (277 aa).

The first 31 residues, Met-1–Ser-31, serve as a signal peptide directing secretion. In terms of domain architecture, Chitin-binding type-1 spans Gln-32–Ser-66. 4 cysteine pairs are disulfide-bonded: Cys-34–Cys-42, Cys-36–Cys-48, Cys-41–Cys-55, and Cys-59–Cys-64. The interval Val-75–Cys-277 is catalytic. Glu-136 serves as the catalytic Proton donor. An N-linked (GlcNAc...) asparagine glycan is attached at Asn-274.

Belongs to the glycosyl hydrolase 19 family. Chitinase class I subfamily.

It catalyses the reaction Random endo-hydrolysis of N-acetyl-beta-D-glucosaminide (1-&gt;4)-beta-linkages in chitin and chitodextrins.. The polypeptide is Endochitinase CHI (Arabidopsis thaliana (Mouse-ear cress)).